A 200-amino-acid chain; its full sequence is ATP-dependent Clp protease proteolytic subunit (200 aa).

S102 serves as the catalytic Nucleophile. The active site involves H127.

The protein belongs to the peptidase S14 family. As to quaternary structure, fourteen ClpP subunits assemble into 2 heptameric rings which stack back to back to give a disk-like structure with a central cavity, resembling the structure of eukaryotic proteasomes.

The protein localises to the cytoplasm. It catalyses the reaction Hydrolysis of proteins to small peptides in the presence of ATP and magnesium. alpha-casein is the usual test substrate. In the absence of ATP, only oligopeptides shorter than five residues are hydrolyzed (such as succinyl-Leu-Tyr-|-NHMec, and Leu-Tyr-Leu-|-Tyr-Trp, in which cleavage of the -Tyr-|-Leu- and -Tyr-|-Trp bonds also occurs).. In terms of biological role, cleaves peptides in various proteins in a process that requires ATP hydrolysis. Has a chymotrypsin-like activity. Plays a major role in the degradation of misfolded proteins. The protein is ATP-dependent Clp protease proteolytic subunit of Dehalococcoides mccartyi (strain ATCC BAA-2266 / KCTC 15142 / 195) (Dehalococcoides ethenogenes (strain 195)).